A 27-amino-acid chain; its full sequence is Conotoxin flf14b (27 aa).

2 disulfides stabilise this stretch: Cys-6–Cys-26 and Cys-10–Cys-22.

In terms of tissue distribution, expressed by the venom duct.

The protein localises to the secreted. The protein is Conotoxin flf14b of Conus anabathrum floridanus (Florida cone).